Here is a 530-residue protein sequence, read N- to C-terminus: Per os infectivity factor 1 (530 aa).

The first 15 residues, 1–15 (MHFAIILLFLLVIIA), serve as a signal peptide directing secretion.

As to quaternary structure, forms the PIF complex together with PIF2 and PIF3. The complex also interacts with per os infectivity factor PIF0.

The protein resides in the virion membrane. In terms of biological role, per os infectivity factor that mediates the specific binding of occluded virions (ODV) to the host midgut target cells. In Autographa californica nuclear polyhedrosis virus (AcMNPV), this protein is Per os infectivity factor 1.